The chain runs to 398 residues: MSSTPHDPFYSSPFGPFYRRHAPYMVQPEYRIYEMNKRLQTRTEDSDNLWWDAFATEFFEDDATLTLSFCLEDGPKRYTIGRTLIPRYFSTVFEGGVTDLYYILKHSKESYHNSSITVDCDQCTMVTQHGKPMFTKVCTEGRLILEFTFDDLMRIKTWHFTIRQYRELLPRSILAMHAQDPQVLEQLSKNITRMGLTNFTLNYLRLCVILEPMQELMSRHKTYNLSPRDCLKTCLFQKWQRMVAPPAEPTRQTTTKRRKRKNSTNNASNSNAGNNATSAYNRKKVPAASLNLSNQVPFPTTKKCIGDKTRVRRNYRGIRNGLDVMVVGEPTLMGGEFGDEDERLITRLENTQYDAANGMDDEEDFNSSPALGNNSPWNSKPPPNAETKSDNPTQQASQ.

Disordered stretches follow at residues 245 to 280 and 354 to 398; these read PPAE…TSAY and DAAN…QASQ. Residues 263 to 279 are compositionally biased toward low complexity; sequence STNNASNSNAGNNATSA. The LIM interaction domain (LID) domain occupies 323-362; that stretch reads DVMVVGEPTLMGGEFGDEDERLITRLENTQYDAANGMDDE.

It belongs to the LDB family. As to expression, expressed in adult brain, lung, spleen and kidney. Isoform b is generally expressed at a higher level than isoform a.

It localises to the nucleus. Binds to the LIM domain of a wide variety of LIM domain-containing transcription factors. The chain is LIM domain-binding protein 2 from Xenopus laevis (African clawed frog).